We begin with the raw amino-acid sequence, 279 residues long: DegV domain-containing protein CPE1310 (279 aa).

The region spanning Ile-4–Glu-277 is the DegV domain. The hexadecanoate site is built by Thr-62 and Ser-94.

In terms of biological role, may bind long-chain fatty acids, such as palmitate, and may play a role in lipid transport or fatty acid metabolism. The sequence is that of DegV domain-containing protein CPE1310 from Clostridium perfringens (strain 13 / Type A).